The chain runs to 380 residues: Chaperone protein DnaJ (380 aa).

Residues 5–69 (DYYEILGVSK…QKRAHYDQFG (65 aa)) enclose the J domain. The CR-type zinc-finger motif lies at 135-217 (GKETDIEIPS…CGGTGRVKRR (83 aa)). 8 residues coordinate Zn(2+): C148, C151, C165, C168, C191, C194, C205, and C208. 4 CXXCXGXG motif repeats span residues 148–155 (CNTCHGTG), 165–172 (CPHCHGAG), 191–198 (CPYCGGTG), and 205–212 (CTTCGGTG).

Belongs to the DnaJ family. Homodimer. The cofactor is Zn(2+).

The protein localises to the cytoplasm. Participates actively in the response to hyperosmotic and heat shock by preventing the aggregation of stress-denatured proteins and by disaggregating proteins, also in an autonomous, DnaK-independent fashion. Unfolded proteins bind initially to DnaJ; upon interaction with the DnaJ-bound protein, DnaK hydrolyzes its bound ATP, resulting in the formation of a stable complex. GrpE releases ADP from DnaK; ATP binding to DnaK triggers the release of the substrate protein, thus completing the reaction cycle. Several rounds of ATP-dependent interactions between DnaJ, DnaK and GrpE are required for fully efficient folding. Also involved, together with DnaK and GrpE, in the DNA replication of plasmids through activation of initiation proteins. The polypeptide is Chaperone protein DnaJ (Geobacillus stearothermophilus (Bacillus stearothermophilus)).